The primary structure comprises 262 residues: Light-harvesting complex-like protein 3 isotype 1, chloroplastic (262 aa).

A chloroplast-targeting transit peptide spans 1 to 39 (MALFSPPISSSSLQNPNFIPKFSFSLLSSNRFSLLSVTR). The next 2 helical transmembrane spans lie at 180–200 (AAMI…VGLV) and 202–222 (QMGN…VLFI).

Interacts with GGR. Forms homodimer, and heterodimer with LIL3.2. Expressed in photosynthetically active tissues (at protein level).

It is found in the plastid. Its subcellular location is the chloroplast thylakoid membrane. In terms of biological role, light-harvesting-like protein required for biosynthesis of phytylated chlorophylls and alpha-tocopherol in green seedlings. Functions by anchoring geranylgeranyl reductase (GGR) in the thylakoid membrane, leading to the stabilization of GGR activity. Binds chlorophyll a in the thylakoid membrane. Plays a role in the regulation of chlorophyll biosynthesis under light stress and under standard growth conditions. This is Light-harvesting complex-like protein 3 isotype 1, chloroplastic (LIL3.1) from Arabidopsis thaliana (Mouse-ear cress).